Here is a 197-residue protein sequence, read N- to C-terminus: UPF0462 protein C4orf33 homolog (197 aa).

Belongs to the UPF0462 family.

This chain is UPF0462 protein C4orf33 homolog, found in Danio rerio (Zebrafish).